Consider the following 494-residue polypeptide: Glycerol kinase 1 (494 aa).

ADP is bound at residue Thr-12. ATP is bound by residues Thr-12, Thr-13, and Ser-14. Thr-12 is a binding site for sn-glycerol 3-phosphate. Position 16 (Arg-16) interacts with ADP. 4 residues coordinate sn-glycerol 3-phosphate: Arg-82, Glu-83, Tyr-134, and Asp-243. Arg-82, Glu-83, Tyr-134, Asp-243, and Gln-244 together coordinate glycerol. ADP-binding residues include Thr-265 and Gly-308. Positions 265, 308, 312, and 408 each coordinate ATP. Residues Gly-408 and Asn-412 each contribute to the ADP site.

The protein belongs to the FGGY kinase family.

It carries out the reaction glycerol + ATP = sn-glycerol 3-phosphate + ADP + H(+). It participates in polyol metabolism; glycerol degradation via glycerol kinase pathway; sn-glycerol 3-phosphate from glycerol: step 1/1. Inhibited by fructose 1,6-bisphosphate (FBP). Its function is as follows. Key enzyme in the regulation of glycerol uptake and metabolism. Catalyzes the phosphorylation of glycerol to yield sn-glycerol 3-phosphate. The polypeptide is Glycerol kinase 1 (Pseudomonas aeruginosa (strain ATCC 15692 / DSM 22644 / CIP 104116 / JCM 14847 / LMG 12228 / 1C / PRS 101 / PAO1)).